We begin with the raw amino-acid sequence, 421 residues long: 3-isopropylmalate dehydratase large subunit (421 aa).

Residues cysteine 302, cysteine 362, and cysteine 365 each contribute to the [4Fe-4S] cluster site.

Belongs to the aconitase/IPM isomerase family. LeuC type 2 subfamily. As to quaternary structure, heterodimer of LeuC and LeuD. [4Fe-4S] cluster is required as a cofactor.

It catalyses the reaction (2R,3S)-3-isopropylmalate = (2S)-2-isopropylmalate. It participates in amino-acid biosynthesis; L-leucine biosynthesis; L-leucine from 3-methyl-2-oxobutanoate: step 2/4. In terms of biological role, catalyzes the isomerization between 2-isopropylmalate and 3-isopropylmalate, via the formation of 2-isopropylmaleate. In Campylobacter concisus (strain 13826), this protein is 3-isopropylmalate dehydratase large subunit.